The chain runs to 373 residues: 4-hydroxy-3-methylbut-2-en-1-yl diphosphate synthase (flavodoxin) (373 aa).

Positions 268, 271, 303, and 310 each coordinate [4Fe-4S] cluster.

The protein belongs to the IspG family. [4Fe-4S] cluster is required as a cofactor.

The enzyme catalyses (2E)-4-hydroxy-3-methylbut-2-enyl diphosphate + oxidized [flavodoxin] + H2O + 2 H(+) = 2-C-methyl-D-erythritol 2,4-cyclic diphosphate + reduced [flavodoxin]. Its pathway is isoprenoid biosynthesis; isopentenyl diphosphate biosynthesis via DXP pathway; isopentenyl diphosphate from 1-deoxy-D-xylulose 5-phosphate: step 5/6. Converts 2C-methyl-D-erythritol 2,4-cyclodiphosphate (ME-2,4cPP) into 1-hydroxy-2-methyl-2-(E)-butenyl 4-diphosphate. The sequence is that of 4-hydroxy-3-methylbut-2-en-1-yl diphosphate synthase (flavodoxin) from Exiguobacterium sp. (strain ATCC BAA-1283 / AT1b).